Reading from the N-terminus, the 673-residue chain is Synaptotagmin-like protein 4 (673 aa).

Positions 4-122 (ILDLSFLSEM…KATGDWFYDQ (119 aa)) constitute a RabBD domain. The segment at 63 to 105 (CARCQEGLGRLIPKSSTCVGCNHLVCRECRVLESNGSWRCKVC) adopts an FYVE-type zinc-finger fold. A disordered region spans residues 184-253 (FEVPKTRSGK…PGNQNAVCGD (70 aa)). Residues Ser-202, Ser-205, Ser-218, Ser-222, and Ser-275 each carry the phosphoserine modification. One can recognise a C2 1 domain in the interval 358–480 (VTGKIAFSLK…KLDKKLDHCL (123 aa)). The residue at position 490 (Ser-490) is a Phosphoserine. In terms of domain architecture, C2 2 spans 509–635 (PASKLPVGGD…ISNGEVVDWM (127 aa)).

Part of a ternary complex containing STX1A and RAB27A. Can bind both dominant negative and dominant active mutants of RAB27A. Binds STXBP1, RAB3A, RAB8A and RAB27B. Interacts with MYO5A. Detected in the pancreatic islet, in particular in insulin-positive beta cells, and in pituitary.

Its subcellular location is the membrane. The protein resides in the cytoplasmic vesicle. It localises to the secretory vesicle membrane. Modulates exocytosis of dense-core granules and secretion of hormones in the pancreas and the pituitary. Interacts with vesicles containing negatively charged phospholipids in a Ca(2+)-independent manner. In Mus musculus (Mouse), this protein is Synaptotagmin-like protein 4 (Sytl4).